Consider the following 729-residue polypeptide: MAPPAKRAKRGWVPPGYKYLGPGNSLDQGEPTNPSDAAAKEHDEAYDQYIKSGKNPYLYFSAADQRFIDQTKDAKDWGGKVGHYFFRTKRAFAPKLATDSEPGTSGVSRAGKRTRPPAYIFINQARAKKKLTSSAAQQSSQTMSDGTSQPDGGNAVHSAARVERAADGPGGSGGGGSGGGGVGVSTGSYDNQTHYRFLGDGWVEITALATRLVHLNMPKSENYCRIRVHNTTDTSVKGNMAKDDAHEQIWTPWSLVDANAWGVWLQPSDWQYICNTMSQLNLVSLDQEIFNVVLKTVTEQDSGGQAIKIYNNDLTACMMVAVDSNNILPYTPAANSMETLGFYPWKPTIASPYRYYFCVDRDLSVTYENQEGTIEHNVMGTPKGMNSQFFTIENTQQITLLRTGDEFATGTYYFDTNPVKLTHTWQTNRQLGQPPLLSTFPEADTDAGTLTAQGSRHGATQMEVNWVSEAIRTRPAQVGFCQPHNDFEASRAGPFAAPKVPADVTQGVDREANGSVRYSYGKQHGENWAAHGPAPERYTWDETNFGSGRDTRDGFIQSAPLVVPPPLNGILTNANPIGTKNDIHFSNVFNSYGPLTAFSHPSPVYPQGQIWDKELDLEHKPRLHITAPFVCKNNAPGQMLVRLGPNLTDQYDPNGATLSRIVTYGTFFWKGKLTMRAKLRANTTWNPVYQVSVEDNGNSYMSVTKWLPTATGNMQSVPLITRPVARNTY.

A compositionally biased stretch (basic residues) spans 1–10 (MAPPAKRAKR). Disordered regions lie at residues 1-39 (MAPP…DAAA), 96-115 (LATD…KRTR), and 130-185 (KLTS…VGVS). The short motif at 4-13 (PAKRAKRGWV) is the Nuclear localization signal element. A phospholipase A2-like region spans residues 19 to 64 (YLGPGNSLDQGEPTNPSDAAAKEHDEAYDQYIKSGKNPYLYFSAAD). Over residues 25–35 (SLDQGEPTNPS) the composition is skewed to polar residues. The span at 132-142 (TSSAAQQSSQT) shows a compositional bias: low complexity. Residues 168–184 (GPGGSGGGGSGGGGVGV) show a composition bias toward gly residues. A Mg(2+)-binding site is contributed by Asn325.

It belongs to the parvoviridae capsid protein family.

The protein resides in the virion. The protein localises to the host nucleus. In terms of biological role, capsid protein self-assembles to form an icosahedral capsid with a T=1 symmetry, about 22 nm in diameter, and consisting of 60 copies of two size variants of the capsid proteins, VP1 and VP2, which differ by the presence of an N-terminal extension in the minor protein VP1. The capsid encapsulates the genomic ssDNA. Capsid proteins are responsible for the attachment to host cell receptors. This attachment induces virion internalization predominantly through clathrin-dependent endocytosis. Binding to the host receptors also induces capsid rearrangements leading to surface exposure of VP1 N-terminus, specifically its phospholipase A2-like region and putative nuclear localization signal(s). VP1 N-terminus might serve as a lipolytic enzyme to breach the endosomal membrane during entry into host cell and might contribute to virus transport to the nucleus. The protein is Capsid protein VP1 of Mus musculus (Mouse).